The primary structure comprises 355 residues: UDP-N-acetylglucosamine--N-acetylmuramyl-(pentapeptide) pyrophosphoryl-undecaprenol N-acetylglucosamine transferase (355 aa).

UDP-N-acetyl-alpha-D-glucosamine-binding positions include 13-15 (TGG), Asn-125, Arg-162, Ser-190, Ile-244, and Gln-289.

This sequence belongs to the glycosyltransferase 28 family. MurG subfamily.

It is found in the cell inner membrane. The enzyme catalyses di-trans,octa-cis-undecaprenyl diphospho-N-acetyl-alpha-D-muramoyl-L-alanyl-D-glutamyl-meso-2,6-diaminopimeloyl-D-alanyl-D-alanine + UDP-N-acetyl-alpha-D-glucosamine = di-trans,octa-cis-undecaprenyl diphospho-[N-acetyl-alpha-D-glucosaminyl-(1-&gt;4)]-N-acetyl-alpha-D-muramoyl-L-alanyl-D-glutamyl-meso-2,6-diaminopimeloyl-D-alanyl-D-alanine + UDP + H(+). Its pathway is cell wall biogenesis; peptidoglycan biosynthesis. In terms of biological role, cell wall formation. Catalyzes the transfer of a GlcNAc subunit on undecaprenyl-pyrophosphoryl-MurNAc-pentapeptide (lipid intermediate I) to form undecaprenyl-pyrophosphoryl-MurNAc-(pentapeptide)GlcNAc (lipid intermediate II). This Neisseria meningitidis serogroup B (strain ATCC BAA-335 / MC58) protein is UDP-N-acetylglucosamine--N-acetylmuramyl-(pentapeptide) pyrophosphoryl-undecaprenol N-acetylglucosamine transferase.